Reading from the N-terminus, the 572-residue chain is Methionine--tRNA ligase (572 aa).

The short motif at 11 to 21 is the 'HIGH' region element; sequence PYINGVKHLGN. Zn(2+) contacts are provided by C143, C146, C156, and C159. The short motif at 341–345 is the 'KMSKS' region element; it reads KFSTS. T344 lines the ATP pocket.

This sequence belongs to the class-I aminoacyl-tRNA synthetase family. MetG type 1 subfamily. Monomer. The cofactor is Zn(2+).

The protein localises to the cytoplasm. It catalyses the reaction tRNA(Met) + L-methionine + ATP = L-methionyl-tRNA(Met) + AMP + diphosphate. Its function is as follows. Is required not only for elongation of protein synthesis but also for the initiation of all mRNA translation through initiator tRNA(fMet) aminoacylation. In Maricaulis maris (strain MCS10) (Caulobacter maris), this protein is Methionine--tRNA ligase.